A 150-amino-acid polypeptide reads, in one-letter code: Protein A151R (150 aa).

Belongs to the asfivirus A151R family. Monomer. Homodimer. Interacts with protein B119L. Interacts with membrane protein E248R. The cofactor is Zn(2+).

Its function is as follows. May participate in a redox cascade for the formation of disulfide bonds in viral proteins. The chain is Protein A151R from African swine fever virus (isolate Pig/Kenya/KEN-50/1950) (ASFV).